A 217-amino-acid polypeptide reads, in one-letter code: Eukaryotic translation initiation factor 4E (217 aa).

Residues 1–30 form a disordered region; the sequence is MATVEPETTPTPNPPTTEEEKTESNQEVAN. A2 carries the post-translational modification N-acetylalanine. The residue at position 22 (T22) is a Phosphothreonine. The EIF4EBP1/2/3 binding stretch occupies residues 37-40; sequence HPLQ. Position 56-57 (56-57) interacts with mRNA; the sequence is WQ. Residues 73–77 are EIF4EBP1/2/3 binding; the sequence is WALYN. MRNA is bound at residue 102 to 103; sequence WE. Residues 132 to 139 form an EIF4EBP1/2/3 binding region; it reads ETLLCLIG. Residues 157 to 162 and 205 to 207 each bind mRNA; these read RAKGDK and TKS. Residue S209 is modified to Phosphoserine; by PKC and MKNK2.

Belongs to the eukaryotic initiation factor 4E family. In terms of assembly, eIF4F is a multi-subunit complex, the composition of which varies with external and internal environmental conditions. It is composed of at least EIF4A, EIF4E and EIF4G1/EIF4G3. EIF4E is also known to interact with other partners. Interacts with EIF4ENIF1/4E-T; promotes recruitment to P-bodies and import into the nucleus. Hypophosphorylated EIF4EBP1, EIF4EBP2 and EIF4EBP3 compete with EIF4G1/EIF4G3 to interact with EIF4E; insulin stimulated MAP-kinase (MAPK1 and MAPK3) phosphorylation of EIF4EBP1 causes dissociation of the complex allowing EIF4G1/EIF4G3 to bind and consequent initiation of translation. Interacts mutually exclusive with EIF4A1 or EIF4A2. Interacts with NGDN and PIWIL2. Component of the CYFIP1-EIF4E-FMR1 complex composed of CYFIP, EIF4E and FMR1. Interacts directly with CYFIP1. Interacts with CLOCK. Binds to MKNK2 in nucleus. Interacts with LIMD1, WTIP and AJUBA. Interacts with APOBEC3G in an RNA-dependent manner. Interacts with LARP1. Interacts with METTL3. Interacts with RBM24; this interaction prevents EIF4E from binding to p53/TP53 mRNA and inhibits the assembly of translation initiation complex. Interacts with DDX3X; interaction is direct and in an RNA-independent manner; this interaction enhances EIF4E cap-binding ability and is required for the repression of cap-dependent translation and the increase of IRES-mediated translation. DDX3X competes with EIF4G1 for interaction with EIF4E. Interacts with EIF4G1; which in a mutual exclusive interaction associates either with EIF1 or with EIF4E on a common binding site. Interacts with BTG4 and CNOT7. Interacts with LRPPRC (via N-terminus); the interaction promotes association of EIF4E with 4ESE-containing mRNAs. Interacts with mRNA cleavage enzyme CPSF3 and its cofactor CPSF1. Interacts (via RING-type zinc finger) with PML; the interaction results in conformational changes of both interacting proteins and reduces EIF4E affinity for the 5' m7G cap of mRNA, thus reducing EIF4E-mediated mRNA nuclear export. Interacts with homeobox protein HHEX/PRH; the interaction inhibits EIF4E-mediated mRNA nuclear export. Interacts with homeobox protein HOXA9; the interaction positively regulates EIF4E-mediated mRNA nuclear export. Interacts with homeobox protein EMX2. (Microbial infection) Interacts with Lassa virus Z protein. As to quaternary structure, (Microbial infection) Interacts with Lymphocytic choriomeningitis virus (LCMV) Z protein (via RING-type zinc finger); the interaction results in conformational changes of both interacting proteins and reduces EIF4E affinity for the m7G mRNA cap structure. In terms of assembly, (Microbial infection) Interacts (via cap-binding region) with potato virus Y VPg; this interaction mediates the translation of the VPg-viral RNA conjugates and interferes with the cellular EIF4E-dependent mRNA export and translation. In terms of processing, phosphorylation increases the ability of the protein to bind to mRNA caps and to form the eIF4F complex. Phosphorylation also enhances its mRNA transport function. Phosphorylation at Ser-209 is not essential for protein synthesis.

The protein localises to the cytoplasm. Its subcellular location is the P-body. It is found in the stress granule. It localises to the nucleus. The protein resides in the nucleus speckle. The protein localises to the nuclear body. Its function is as follows. Acts in the cytoplasm to initiate and regulate protein synthesis and is required in the nucleus for export of a subset of mRNAs from the nucleus to the cytoplasm which promotes processes such as RNA capping, processing and splicing. Component of the protein complex eIF4F, which is involved in the recognition of the mRNA cap, ATP-dependent unwinding of 5'-terminal secondary structure and recruitment of mRNA to the ribosome. This protein recognizes and binds the 7-methylguanosine (m7G)-containing mRNA cap during an early step in the initiation of protein synthesis and facilitates ribosome binding by inducing the unwinding of the mRNAs secondary structures. Together with EIF4G1, antagonizes the scanning promoted by EIF1-EIF4G1 and is required for TISU translation, a process where the TISU element recognition makes scanning unnecessary. In addition to its role in translation initiation, also acts as a regulator of translation and stability in the cytoplasm. Component of the CYFIP1-EIF4E-FMR1 complex which binds to the mRNA cap and mediates translational repression: in the complex, EIF4E mediates the binding to the mRNA cap. Component of a multiprotein complex that sequesters and represses translation of proneurogenic factors during neurogenesis. In P-bodies, component of a complex that mediates the storage of translationally inactive mRNAs in the cytoplasm and prevents their degradation. May play an important role in spermatogenesis through translational regulation of stage-specific mRNAs during germ cell development. As well as its roles in translation, also involved in mRNA nucleocytoplasmic transport. Its role in mRNA export from the nucleus to the cytoplasm relies on its ability to bind the m7G cap of RNAs and on the presence of the 50-nucleotide EIF4E sensitivity element (4ESE) in the 3'UTR of sensitive transcripts. Interaction with the 4ESE is mediated by LRPPRC which binds simultaneously to both EIF4E and the 4ESE, thereby acting as a platform for assembly for the RNA export complex. EIF4E-dependent mRNA export is independent of ongoing protein or RNA synthesis and is also NFX1-independent but is XPO1-dependent with LRPPRC interacting with XPO1 to form an EIF4E-dependent mRNA export complex. Alters the composition of the cytoplasmic face of the nuclear pore to promote RNA export by reducing RANBP2 expression, relocalizing nucleoporin NUP214 and increasing expression of RANBP1 and RNA export factors DDX19 and GLE1. Promotes the nuclear export of cyclin CCND1 mRNA. Promotes the nuclear export of NOS2/iNOS mRNA. Promotes the nuclear export of MDM2 mRNA. Promotes the export of additional mRNAs, including others involved in the cell cycle. In the nucleus, binds to capped splice factor-encoding mRNAs and stimulates their nuclear export to enhance splice factor production by increasing their cytoplasmic availability to the translation machinery. May also regulate splicing through interaction with the spliceosome in an RNA and m7G cap-dependent manner. Also binds to some pre-mRNAs and may play a role in their recruitment to the spliceosome. Promotes steady-state capping of a subset of coding and non-coding RNAs by mediating nuclear export of capping machinery mRNAs including RNMT, RNGTT and RAMAC to enhance their translation. Stimulates mRNA 3'-end processing by promoting the expression of several core cleavage complex factors required for mRNA cleavage and polyadenylation, and may also have a direct effect through its interaction with the CPSF3 cleavage enzyme. Rescues cells from apoptosis by promoting activation of serine/threonine-protein kinase AKT1 through mRNA export of NBS1 which potentiates AKT1 phosphorylation and also through mRNA export of AKT1 effectors, allowing for increased production of these proteins. In Homo sapiens (Human), this protein is Eukaryotic translation initiation factor 4E.